The chain runs to 485 residues: Calcium-dependent protein kinase 27 (485 aa).

A lipid anchor (N-myristoyl glycine) is attached at G2. The region spanning 28–290 (YILGEELGRG…AAEVLGHPWM (263 aa)) is the Protein kinase domain. ATP-binding positions include 34-42 (LGRGNFGLT) and K57. The active-site Proton acceptor is the D156. S196 carries the phosphoserine modification. An autoinhibitory domain region spans residues 295-325 (ASDKPIDGVVLSRLKRFRDANKFKKVVLKFI). 4 EF-hand domains span residues 332–367 (EEIK…LGSN), 368–403 (LSKT…RYKL), 404–439 (DRDE…DGAG), and 444–474 (IKQI…ESSL). Ca(2+)-binding residues include D345, D347, S349, N351, E356, D381, D383, N385, T387, E392, D417, D419, D421, H423, E428, D452, D454, D456, K458, and E463.

This sequence belongs to the protein kinase superfamily. Ser/Thr protein kinase family. CDPK subfamily.

The protein resides in the membrane. It carries out the reaction L-seryl-[protein] + ATP = O-phospho-L-seryl-[protein] + ADP + H(+). The catalysed reaction is L-threonyl-[protein] + ATP = O-phospho-L-threonyl-[protein] + ADP + H(+). Activated by calcium. Autophosphorylation may play an important role in the regulation of the kinase activity. In terms of biological role, may play a role in signal transduction pathways that involve calcium as a second messenger. In Arabidopsis thaliana (Mouse-ear cress), this protein is Calcium-dependent protein kinase 27 (CPK27).